A 411-amino-acid chain; its full sequence is Multifunctional CCA protein (411 aa).

The ATP site is built by glycine 8 and arginine 11. Positions 8 and 11 each coordinate CTP. Residues aspartate 21 and aspartate 23 each coordinate Mg(2+). Residues arginine 91, arginine 137, and arginine 140 each contribute to the ATP site. CTP contacts are provided by arginine 91, arginine 137, and arginine 140. Positions 228-329 (CGIHTLMVAK…VNILDQIDSW (102 aa)) constitute an HD domain.

It belongs to the tRNA nucleotidyltransferase/poly(A) polymerase family. Bacterial CCA-adding enzyme type 1 subfamily. As to quaternary structure, monomer. Can also form homodimers and oligomers. Requires Mg(2+) as cofactor. The cofactor is Ni(2+).

It carries out the reaction a tRNA precursor + 2 CTP + ATP = a tRNA with a 3' CCA end + 3 diphosphate. The enzyme catalyses a tRNA with a 3' CCA end + 2 CTP + ATP = a tRNA with a 3' CCACCA end + 3 diphosphate. Catalyzes the addition and repair of the essential 3'-terminal CCA sequence in tRNAs without using a nucleic acid template. Adds these three nucleotides in the order of C, C, and A to the tRNA nucleotide-73, using CTP and ATP as substrates and producing inorganic pyrophosphate. tRNA 3'-terminal CCA addition is required both for tRNA processing and repair. Also involved in tRNA surveillance by mediating tandem CCA addition to generate a CCACCA at the 3' terminus of unstable tRNAs. While stable tRNAs receive only 3'-terminal CCA, unstable tRNAs are marked with CCACCA and rapidly degraded. The chain is Multifunctional CCA protein from Photobacterium profundum (strain SS9).